The chain runs to 173 residues: RNA pyrophosphohydrolase (173 aa).

The region spanning 6–149 (GFRANVGIII…KRDVYRKVMK (144 aa)) is the Nudix hydrolase domain. The Nudix box signature appears at 38–59 (GGVDDGETPEEAMYRELYEEVG).

This sequence belongs to the Nudix hydrolase family. RppH subfamily. It depends on a divalent metal cation as a cofactor.

Its function is as follows. Accelerates the degradation of transcripts by removing pyrophosphate from the 5'-end of triphosphorylated RNA, leading to a more labile monophosphorylated state that can stimulate subsequent ribonuclease cleavage. The sequence is that of RNA pyrophosphohydrolase from Shewanella woodyi (strain ATCC 51908 / MS32).